The sequence spans 214 residues: Outer-membrane lipoprotein LolB (214 aa).

An N-terminal signal peptide occupies residues 1–25 (MNNLKRLTKTIFSCFTLSALLLLAG). The N-palmitoyl cysteine moiety is linked to residue C26. C26 carries S-diacylglycerol cysteine lipidation. Residues 143–160 (QVIESDSQGKPKQLTNTQ) show a composition bias toward polar residues. Positions 143-163 (QVIESDSQGKPKQLTNTQTPP) are disordered.

Belongs to the LolB family. In terms of assembly, monomer.

It is found in the cell outer membrane. Functionally, plays a critical role in the incorporation of lipoproteins in the outer membrane after they are released by the LolA protein. The chain is Outer-membrane lipoprotein LolB from Shewanella baltica (strain OS223).